The sequence spans 275 residues: Multivesicular body subunit 12A (275 aa).

An MABP domain is found at 5–145 (STPITGLAWI…GLVFWCRKGS (141 aa)). The SH3-binding signature appears at 151 to 156 (PTPKPR). Residues 216–267 (IDGIPFTIHPMFENTINNSSVAASDFRDLHIKTLSEIESEYNYGFVVEKTAA) enclose the UMA domain.

It belongs to the MVB12 family. As to quaternary structure, component of the ESCRT-I complex (endosomal sorting complex required for transport I).

Its subcellular location is the cytoplasm. The protein resides in the endosome. It is found in the late endosome membrane. Functionally, component of the ESCRT-I complex, a regulator of vesicular trafficking process. Required for the sorting of endocytic ubiquitinated cargos into multivesicular bodies. The sequence is that of Multivesicular body subunit 12A (mvb12a) from Xenopus laevis (African clawed frog).